The following is a 391-amino-acid chain: N-acetylaspartylglutamate synthase A (391 aa).

The 186-residue stretch at 115–300 (FQELAGHGVP…VGGIIADYTM (186 aa)) folds into the ATP-grasp domain. Residues K154, 189 to 199 (QKYVKESHGKD), and R215 contribute to the ATP site. Mg(2+) contacts are provided by D260, E273, and N275. Mn(2+) is bound by residues D260, E273, and N275. S319 is subject to Phosphoserine. The segment covering 341 to 350 (TINSGSTSSE) has biased composition (polar residues). Residues 341 to 379 (TINSGSTSSESEPELGEIRDSSASTMGAPPSMLPEPGYN) form a disordered region.

This sequence belongs to the RimK family. The cofactor is Mg(2+). Mn(2+) is required as a cofactor.

It is found in the cytoplasm. The enzyme catalyses N-acetyl-L-aspartate + L-glutamate + ATP = N-acetyl-L-aspartyl-L-glutamate + ADP + phosphate + H(+). The catalysed reaction is N-acetyl-L-aspartate + 2 L-glutamate + 2 ATP = N-acetyl-L-aspartyl-L-glutamyl-L-glutamate + 2 ADP + 2 phosphate + 2 H(+). Catalyzes the synthesis of N-acetyl-L-aspartyl-L-glutamate (NAAG) and N-acetyl-L-aspartyl-L-glutamyl-L-glutamate. In Homo sapiens (Human), this protein is N-acetylaspartylglutamate synthase A (RIMKLA).